A 232-amino-acid polypeptide reads, in one-letter code: Phosphatidylserine decarboxylase proenzyme (232 aa).

Ser-190 functions as the Schiff-base intermediate with substrate; via pyruvic acid in the catalytic mechanism. Ser-190 is modified (pyruvic acid (Ser); by autocatalysis).

This sequence belongs to the phosphatidylserine decarboxylase family. PSD-A subfamily. As to quaternary structure, heterodimer of a large membrane-associated beta subunit and a small pyruvoyl-containing alpha subunit. It depends on pyruvate as a cofactor. Is synthesized initially as an inactive proenzyme. Formation of the active enzyme involves a self-maturation process in which the active site pyruvoyl group is generated from an internal serine residue via an autocatalytic post-translational modification. Two non-identical subunits are generated from the proenzyme in this reaction, and the pyruvate is formed at the N-terminus of the alpha chain, which is derived from the carboxyl end of the proenzyme. The post-translation cleavage follows an unusual pathway, termed non-hydrolytic serinolysis, in which the side chain hydroxyl group of the serine supplies its oxygen atom to form the C-terminus of the beta chain, while the remainder of the serine residue undergoes an oxidative deamination to produce ammonia and the pyruvoyl prosthetic group on the alpha chain.

The protein resides in the cell membrane. The enzyme catalyses a 1,2-diacyl-sn-glycero-3-phospho-L-serine + H(+) = a 1,2-diacyl-sn-glycero-3-phosphoethanolamine + CO2. It participates in phospholipid metabolism; phosphatidylethanolamine biosynthesis; phosphatidylethanolamine from CDP-diacylglycerol: step 2/2. Functionally, catalyzes the formation of phosphatidylethanolamine (PtdEtn) from phosphatidylserine (PtdSer). The polypeptide is Phosphatidylserine decarboxylase proenzyme (Brucella abortus (strain S19)).